Reading from the N-terminus, the 124-residue chain is Fluoride-specific ion channel FluC (124 aa).

4 helical membrane passes run 4–24 (ILFV…ISIF), 35–55 (FGTL…YALG), 70–90 (VGLL…LLLI), and 95–115 (WLKA…MVYL). The Na(+) site is built by glycine 74 and threonine 77.

Belongs to the fluoride channel Fluc/FEX (TC 1.A.43) family.

The protein resides in the cell inner membrane. It catalyses the reaction fluoride(in) = fluoride(out). With respect to regulation, na(+) is not transported, but it plays an essential structural role and its presence is essential for fluoride channel function. Fluoride-specific ion channel. Important for reducing fluoride concentration in the cell, thus reducing its toxicity. The chain is Fluoride-specific ion channel FluC from Shewanella woodyi (strain ATCC 51908 / MS32).